Consider the following 241-residue polypeptide: Carboxy-S-adenosyl-L-methionine synthase (241 aa).

S-adenosyl-L-methionine is bound by residues Y38, 63–65 (GCS), 88–89 (DN), 116–117 (DI), N131, and R198.

Belongs to the class I-like SAM-binding methyltransferase superfamily. Cx-SAM synthase family. In terms of assembly, homodimer.

It carries out the reaction prephenate + S-adenosyl-L-methionine = carboxy-S-adenosyl-L-methionine + 3-phenylpyruvate + H2O. Functionally, catalyzes the conversion of S-adenosyl-L-methionine (SAM) to carboxy-S-adenosyl-L-methionine (Cx-SAM). This is Carboxy-S-adenosyl-L-methionine synthase from Haemophilus influenzae (strain ATCC 51907 / DSM 11121 / KW20 / Rd).